The following is an 84-amino-acid chain: Beta-defensin 119 (84 aa).

The N-terminal stretch at 1 to 21 (MKLLYLFLAILLVIEEPVISG) is a signal peptide. 3 cysteine pairs are disulfide-bonded: C28-C55, C35-C49, and C39-C56.

It belongs to the beta-defensin family.

It localises to the secreted. In terms of biological role, has antibacterial activity. The protein is Beta-defensin 119 (DEFB119) of Pongo pygmaeus (Bornean orangutan).